The primary structure comprises 266 residues: Glutamate racemase (266 aa).

Substrate-binding positions include 9–10 (DS) and 41–42 (YG). The active-site Proton donor/acceptor is the cysteine 72. 73–74 (NT) is a substrate binding site. The Proton donor/acceptor role is filled by cysteine 184. 185–186 (TH) lines the substrate pocket.

The protein belongs to the aspartate/glutamate racemases family.

It carries out the reaction L-glutamate = D-glutamate. The protein operates within cell wall biogenesis; peptidoglycan biosynthesis. Its function is as follows. Provides the (R)-glutamate required for cell wall biosynthesis. This Staphylococcus haemolyticus protein is Glutamate racemase.